A 147-amino-acid polypeptide reads, in one-letter code: MKLVLQRVKEASVSIDGKIAGAINQGLLLLVGVGPDDAAEDLAYAVRKIVNMRIFSDADGKMNQSIQDIKGSILSVSQFTLYADTKKGNRPAFTGAAKPDMASQFYDRFNEQLADFVPVERGVFGADMQVSLINDGPVTIILDTKCH.

A Gly-cisPro motif, important for rejection of L-amino acids motif is present at residues 136–137 (GP).

Belongs to the DTD family. As to quaternary structure, homodimer.

It localises to the cytoplasm. It catalyses the reaction glycyl-tRNA(Ala) + H2O = tRNA(Ala) + glycine + H(+). The catalysed reaction is a D-aminoacyl-tRNA + H2O = a tRNA + a D-alpha-amino acid + H(+). An aminoacyl-tRNA editing enzyme that deacylates mischarged D-aminoacyl-tRNAs. Also deacylates mischarged glycyl-tRNA(Ala), protecting cells against glycine mischarging by AlaRS. Acts via tRNA-based rather than protein-based catalysis; rejects L-amino acids rather than detecting D-amino acids in the active site. By recycling D-aminoacyl-tRNA to D-amino acids and free tRNA molecules, this enzyme counteracts the toxicity associated with the formation of D-aminoacyl-tRNA entities in vivo and helps enforce protein L-homochirality. In Streptococcus dysgalactiae subsp. equisimilis (Streptococcus equisimilis), this protein is D-aminoacyl-tRNA deacylase.